A 239-amino-acid polypeptide reads, in one-letter code: Heptaprenylglyceryl phosphate synthase (239 aa).

Sn-glycerol 1-phosphate is bound at residue Lys12. Positions 14 and 40 each coordinate Mg(2+). Residues 159-164 (YLEYSG), Gly189, and 209-210 (GN) contribute to the sn-glycerol 1-phosphate site.

This sequence belongs to the GGGP/HepGP synthase family. Group I subfamily. In terms of assembly, homodimer. The cofactor is Mg(2+).

The enzyme catalyses sn-glycerol 1-phosphate + all-trans-heptaprenyl diphosphate = 3-heptaprenyl-sn-glycero-1-phosphate + diphosphate. The protein operates within membrane lipid metabolism; glycerophospholipid metabolism. Its function is as follows. Prenyltransferase that catalyzes in vivo the transfer of the heptaprenyl moiety of heptaprenyl pyrophosphate (HepPP; 35 carbon atoms) to the C3 hydroxyl of sn-glycerol-1-phosphate (G1P), producing heptaprenylglyceryl phosphate (HepGP). This reaction is an ether-bond-formation step in the biosynthesis of archaea-type G1P-based membrane lipids found in Bacillales. The protein is Heptaprenylglyceryl phosphate synthase of Geobacillus thermodenitrificans (strain NG80-2).